We begin with the raw amino-acid sequence, 31 residues long: Cytochrome b6-f complex subunit 6 (31 aa).

A helical transmembrane segment spans residues 4–24 (ITSYFGFLLVALTITSALFIG).

The protein belongs to the PetL family. The 4 large subunits of the cytochrome b6-f complex are cytochrome b6, subunit IV (17 kDa polypeptide, PetD), cytochrome f and the Rieske protein, while the 4 small subunits are PetG, PetL, PetM and PetN. The complex functions as a dimer.

Its subcellular location is the plastid. It is found in the chloroplast thylakoid membrane. Functionally, component of the cytochrome b6-f complex, which mediates electron transfer between photosystem II (PSII) and photosystem I (PSI), cyclic electron flow around PSI, and state transitions. PetL is important for photoautotrophic growth as well as for electron transfer efficiency and stability of the cytochrome b6-f complex. This is Cytochrome b6-f complex subunit 6 from Pelargonium hortorum (Common geranium).